The primary structure comprises 358 residues: tRNA-specific 2-thiouridylase MnmA (358 aa).

ATP contacts are provided by residues 7-14 and Met-33; that span reads AMSGGVDS. Cys-102 functions as the Nucleophile in the catalytic mechanism. Cys-102 and Cys-199 are disulfide-bonded. An ATP-binding site is contributed by Gly-126. An interaction with tRNA region spans residues 149 to 151; the sequence is KDQ. The active-site Cysteine persulfide intermediate is the Cys-199. The interaction with tRNA stretch occupies residues 305 to 306; the sequence is RY.

It belongs to the MnmA/TRMU family.

The protein resides in the cytoplasm. It carries out the reaction S-sulfanyl-L-cysteinyl-[protein] + uridine(34) in tRNA + AH2 + ATP = 2-thiouridine(34) in tRNA + L-cysteinyl-[protein] + A + AMP + diphosphate + H(+). In terms of biological role, catalyzes the 2-thiolation of uridine at the wobble position (U34) of tRNA, leading to the formation of s(2)U34. This Halothermothrix orenii (strain H 168 / OCM 544 / DSM 9562) protein is tRNA-specific 2-thiouridylase MnmA.